The chain runs to 312 residues: Protein phosphatase 2A catalytic subunit B (312 aa).

Positions 55, 57, 83, and 115 each coordinate Mn(2+). Catalysis depends on H116, which acts as the Proton donor. H165 and H240 together coordinate Mn(2+).

This sequence belongs to the PPP phosphatase family. PP-2A subfamily. As to quaternary structure, component of the Sca1 complex composed of at least gefA, gefH, scaA, phr, and the protein phosphatase 2A subunits pppA and pho2B. Mn(2+) serves as cofactor.

The protein resides in the cell membrane. It carries out the reaction O-phospho-L-seryl-[protein] + H2O = L-seryl-[protein] + phosphate. It catalyses the reaction O-phospho-L-threonyl-[protein] + H2O = L-threonyl-[protein] + phosphate. Functionally, component of the Sca1 complex, a regulator of cell motility, chemotaxis and signal relay. The Sca1 complex is recruited to the plasma membrane in a chemoattractant- and F-actin-dependent manner and is enriched at the leading edge of chemotaxing cells where it regulates F-actin dynamics and signal relay by controlling the activation of rasC and the downstream target of rapamycin complex 2 (TORC2)-Akt/protein kinase B (PKB) pathway. The chain is Protein phosphatase 2A catalytic subunit B from Dictyostelium discoideum (Social amoeba).